Here is a 172-residue protein sequence, read N- to C-terminus: Protein/nucleic acid deglycase 2 (172 aa).

Residues 3 to 171 enclose the PfpI endopeptidase domain; sequence KKIAVLITDE…FNREALRLLG (169 aa). The Nucleophile role is filled by C104.

The protein belongs to the peptidase C56 family. As to quaternary structure, exists in monomeric, trimeric, and hexameric forms.

It is found in the cytoplasm. The enzyme catalyses N(omega)-(1-hydroxy-2-oxopropyl)-L-arginyl-[protein] + H2O = lactate + L-arginyl-[protein] + H(+). It catalyses the reaction N(6)-(1-hydroxy-2-oxopropyl)-L-lysyl-[protein] + H2O = lactate + L-lysyl-[protein] + H(+). The catalysed reaction is S-(1-hydroxy-2-oxopropyl)-L-cysteinyl-[protein] + H2O = lactate + L-cysteinyl-[protein] + H(+). It carries out the reaction N(omega)-(1-hydroxy-2-oxoethyl)-L-arginyl-[protein] + H2O = L-arginyl-[protein] + glycolate + H(+). The enzyme catalyses N(6)-(1-hydroxy-2-oxoethyl)-L-lysyl-[protein] + H2O = glycolate + L-lysyl-[protein] + H(+). It catalyses the reaction S-(1-hydroxy-2-oxoethyl)-L-cysteinyl-[protein] + H2O = glycolate + L-cysteinyl-[protein] + H(+). The catalysed reaction is N(2)-(1-hydroxy-2-oxopropyl)-dGTP + H2O = lactate + dGTP + H(+). It carries out the reaction N(2)-(1-hydroxy-2-oxopropyl)-GTP + H2O = lactate + GTP + H(+). The enzyme catalyses N(2)-(1-hydroxy-2-oxopropyl)-GDP + H2O = lactate + GDP + H(+). It catalyses the reaction N(2)-(1-hydroxy-2-oxopropyl)-GMP + H2O = lactate + GMP + H(+). The catalysed reaction is N(2)-(1-hydroxy-2-oxoethyl)-dGTP + H2O = dGTP + glycolate + H(+). It carries out the reaction N(2)-(1-hydroxy-2-oxoethyl)-GTP + H2O = glycolate + GTP + H(+). The enzyme catalyses N(2)-(1-hydroxy-2-oxoethyl)-GDP + H2O = glycolate + GDP + H(+). It catalyses the reaction N(2)-(1-hydroxy-2-oxoethyl)-GMP + H2O = glycolate + GMP + H(+). The catalysed reaction is an N(2)-(1-hydroxy-2-oxopropyl)-guanosine in RNA + H2O = a guanosine in RNA + lactate + H(+). It carries out the reaction an N(2)-(1-hydroxy-2-oxopropyl)-2'-deoxyguanosine in DNA + H2O = a 2'-deoxyguanosine in DNA + lactate + H(+). The enzyme catalyses an N(2)-(1-hydroxy-2-oxoethyl)-guanosine in RNA + H2O = a guanosine in RNA + glycolate + H(+). It catalyses the reaction an N(2)-(1-hydroxy-2-oxoethyl)-2'-deoxyguanosine in DNA + H2O = a 2'-deoxyguanosine in DNA + glycolate + H(+). With respect to regulation, glyoxalase activity is inhibited by zinc ions at pH 7.0. In terms of biological role, protein and nucleotide deglycase that catalyzes the deglycation of the Maillard adducts formed between amino groups of proteins or nucleotides and reactive carbonyl groups of glyoxals. Thus, functions as a protein deglycase that repairs methylglyoxal- and glyoxal-glycated proteins, and releases repaired proteins and lactate or glycolate, respectively. Deglycates cysteine, arginine and lysine residues in proteins, and thus reactivates these proteins by reversing glycation by glyoxals. Is able to repair glycated serum albumin, collagen, glyceraldehyde-3-phosphate dehydrogenase, and fructose biphosphate aldolase. Acts on early glycation intermediates (hemithioacetals and aminocarbinols), preventing the formation of advanced glycation endproducts (AGE) that cause irreversible damage. Also functions as a nucleotide deglycase able to repair glycated guanine in the free nucleotide pool (GTP, GDP, GMP, dGTP) and in DNA and RNA. Is thus involved in a major nucleotide repair system named guanine glycation repair (GG repair), dedicated to reversing methylglyoxal and glyoxal damage via nucleotide sanitization and direct nucleic acid repair. In vitro, prevents acrylamide formation in asparagine/glyoxal and asparagine/sugar mixtures at 55 degrees Celsius, likely by degrading asparagine/glyoxal Maillard adducts formed at high temperatures. Also displays an apparent glyoxalase activity that in fact reflects its deglycase activity. Is a general stress protein; is required for the protection of bacterial cells against many environmental stresses, including oxidative, thermal, osmotic, UV, and pH stresses. And plays an important role in protection against electrophile/carbonyl stress. This is Protein/nucleic acid deglycase 2 (yhbO) from Escherichia coli (strain K12).